The following is a 315-amino-acid chain: Protoheme IX farnesyltransferase 1 (315 aa).

8 helical membrane-spanning segments follow: residues 30-50 (PGII…AWIQ), 56-76 (GGPG…LVMA), 106-126 (IPPP…FIML), 132-152 (LTAV…TLWF), 162-182 (VGSF…TGYI), 186-206 (AILL…AIGI), 249-269 (LYID…AIWL), and 289-309 (FFYS…DSFI).

It belongs to the UbiA prenyltransferase family. Protoheme IX farnesyltransferase subfamily. As to quaternary structure, interacts with CtaA.

It localises to the cell membrane. The enzyme catalyses heme b + (2E,6E)-farnesyl diphosphate + H2O = Fe(II)-heme o + diphosphate. The protein operates within porphyrin-containing compound metabolism; heme O biosynthesis; heme O from protoheme: step 1/1. Functionally, converts heme B (protoheme IX) to heme O by substitution of the vinyl group on carbon 2 of heme B porphyrin ring with a hydroxyethyl farnesyl side group. The protein is Protoheme IX farnesyltransferase 1 of Bacillus velezensis (strain DSM 23117 / BGSC 10A6 / LMG 26770 / FZB42) (Bacillus amyloliquefaciens subsp. plantarum).